A 510-amino-acid polypeptide reads, in one-letter code: ATP synthase subunit alpha (510 aa).

170 to 177 serves as a coordination point for ATP; it reads GDRQTGKT.

It belongs to the ATPase alpha/beta chains family. F-type ATPases have 2 components, CF(1) - the catalytic core - and CF(0) - the membrane proton channel. CF(1) has five subunits: alpha(3), beta(3), gamma(1), delta(1), epsilon(1). CF(0) has three main subunits: a(1), b(2) and c(9-12). The alpha and beta chains form an alternating ring which encloses part of the gamma chain. CF(1) is attached to CF(0) by a central stalk formed by the gamma and epsilon chains, while a peripheral stalk is formed by the delta and b chains.

The protein localises to the cell inner membrane. It catalyses the reaction ATP + H2O + 4 H(+)(in) = ADP + phosphate + 5 H(+)(out). Produces ATP from ADP in the presence of a proton gradient across the membrane. The alpha chain is a regulatory subunit. This is ATP synthase subunit alpha from Maricaulis maris (strain MCS10) (Caulobacter maris).